A 172-amino-acid polypeptide reads, in one-letter code: Scytalone dehydratase-like protein Arp1 (172 aa).

Tyr49 provides a ligand contact to substrate. Active-site residues include His84 and His109. Asn130 is a binding site for substrate.

This sequence belongs to the scytalone dehydratase family. As to quaternary structure, homotrimer. Each subunit contains an active site, located in the central part of the hydrophobic core of the monomer, which functions independently.

Scytalone dehydratase-like protein; part of the Pks2 gene cluster that mediates the formation of infectious structures (appressoria), enabling these fungi to kill insects faster. The product of the Pks2 gene cluster is different from the one of Pks1 and has still not been identified. The polypeptide is Scytalone dehydratase-like protein Arp1 (Metarhizium robertsii (strain ARSEF 23 / ATCC MYA-3075) (Metarhizium anisopliae (strain ARSEF 23))).